We begin with the raw amino-acid sequence, 384 residues long: Chaperone protein DnaJ (384 aa).

A J domain is found at 5-70; it reads DYYEVLGVAR…QKKAAYDRFG (66 aa). A CR-type zinc finger spans residues 138 to 216; the sequence is GAQKTINVPG…CRGAGRVQKE (79 aa). Residues C151, C154, C168, C171, C190, C193, C204, and C207 each contribute to the Zn(2+) site. 4 CXXCXGXG motif repeats span residues 151 to 158, 168 to 175, 190 to 197, and 204 to 211; these read CAACNGTG, CPTCSGMG, CPTCSGHG, and CQECRGAG. Positions 300–322 are disordered; sequence KVPPGTQSGKQLRLRGKGMPPLR.

Belongs to the DnaJ family. In terms of assembly, homodimer. Requires Zn(2+) as cofactor.

Its subcellular location is the cytoplasm. Functionally, participates actively in the response to hyperosmotic and heat shock by preventing the aggregation of stress-denatured proteins and by disaggregating proteins, also in an autonomous, DnaK-independent fashion. Unfolded proteins bind initially to DnaJ; upon interaction with the DnaJ-bound protein, DnaK hydrolyzes its bound ATP, resulting in the formation of a stable complex. GrpE releases ADP from DnaK; ATP binding to DnaK triggers the release of the substrate protein, thus completing the reaction cycle. Several rounds of ATP-dependent interactions between DnaJ, DnaK and GrpE are required for fully efficient folding. Also involved, together with DnaK and GrpE, in the DNA replication of plasmids through activation of initiation proteins. The protein is Chaperone protein DnaJ of Paracoccus denitrificans (strain Pd 1222).